A 353-amino-acid chain; its full sequence is MDLINSVLNLFVPPASLITLAFSWPALCFPHACEWLYNTVYGDNMDGKVVIITGASSGIGEQIAYEYALRRACLVLVARREHRLRGIAENARRMGARHVMIVAADVVKEDECRRFVNETINFYGRVDHLVNTVSLGHTFYFEEVTDTSVFPVLLDINFWGNIYPTLVALPYLHRTNGRVIINASVESWLPLPRMSLYAAAKAALVNFYETLRFELRDEVGVTIATHGWIGSEMTSGKFMLEEGAEMQWKEEREMNVIGGPVEEFARLMVAGACRGDAYVKYPSWYDVFLLYRVFAPNVLNWAFRLLIAPQGTKRTSSYVGTGRSLEGRPMLEAPSPRTALLAPYSFSGGGQLS.

A helical; Signal-anchor for type II membrane protein membrane pass occupies residues 10 to 30 (LFVPPASLITLAFSWPALCFP). The short motif at 13–26 (PPASLITLAFSWPA) is the Proline-knob element. NADP(+) is bound by residues 54–80 (GASSGIGEQIAYEYALRRACLVLVARR) and Asp105. Position 184 (Ser184) interacts with substrate. Tyr197 serves as the catalytic Proton acceptor. Residues 197–201 (YAAAK) and Lys201 each bind NADP(+).

Belongs to the short-chain dehydrogenases/reductases (SDR) family. Expressed in seeds (at protein level).

It is found in the lipid droplet. Its subcellular location is the membrane. It carries out the reaction an 11beta-hydroxysteroid + NADP(+) = an 11-oxosteroid + NADPH + H(+). Its function is as follows. Has dehydrogenase activity against 11 beta-hydroxysteroid and 17 beta-hydroxysteroid. May be involved in signal transduction regulated by various sterols. The sequence is that of 11-beta-hydroxysteroid dehydrogenase B from Arachis hypogaea (Peanut).